We begin with the raw amino-acid sequence, 316 residues long: Ribosomal protein L11 methyltransferase (316 aa).

S-adenosyl-L-methionine-binding residues include T160, G181, D203, and N246.

Belongs to the methyltransferase superfamily. PrmA family.

The protein localises to the cytoplasm. The catalysed reaction is L-lysyl-[protein] + 3 S-adenosyl-L-methionine = N(6),N(6),N(6)-trimethyl-L-lysyl-[protein] + 3 S-adenosyl-L-homocysteine + 3 H(+). Methylates ribosomal protein L11. This Heliobacterium modesticaldum (strain ATCC 51547 / Ice1) protein is Ribosomal protein L11 methyltransferase.